A 444-amino-acid chain; its full sequence is 23S rRNA (uracil(1939)-C(5))-methyltransferase RlmD (444 aa).

The region spanning 5-67 (RNRLDRTPFQ…RHFDEAKTVG (63 aa)) is the TRAM domain. Cys-80, Cys-86, Cys-89, and Cys-168 together coordinate [4Fe-4S] cluster. S-adenosyl-L-methionine-binding residues include Gln-276, Phe-305, Asn-310, Glu-326, Asp-353, and Asp-374. Cys-400 functions as the Nucleophile in the catalytic mechanism.

The protein belongs to the class I-like SAM-binding methyltransferase superfamily. RNA M5U methyltransferase family. RlmD subfamily.

The catalysed reaction is uridine(1939) in 23S rRNA + S-adenosyl-L-methionine = 5-methyluridine(1939) in 23S rRNA + S-adenosyl-L-homocysteine + H(+). Functionally, catalyzes the formation of 5-methyl-uridine at position 1939 (m5U1939) in 23S rRNA. The sequence is that of 23S rRNA (uracil(1939)-C(5))-methyltransferase RlmD from Xanthomonas axonopodis pv. citri (strain 306).